The sequence spans 425 residues: Glutamate-1-semialdehyde 2,1-aminomutase (425 aa).

The residue at position 265 (Lys265) is an N6-(pyridoxal phosphate)lysine.

Belongs to the class-III pyridoxal-phosphate-dependent aminotransferase family. HemL subfamily. In terms of assembly, homodimer. It depends on pyridoxal 5'-phosphate as a cofactor.

It is found in the cytoplasm. The enzyme catalyses (S)-4-amino-5-oxopentanoate = 5-aminolevulinate. It participates in porphyrin-containing compound metabolism; protoporphyrin-IX biosynthesis; 5-aminolevulinate from L-glutamyl-tRNA(Glu): step 2/2. The sequence is that of Glutamate-1-semialdehyde 2,1-aminomutase from Nitrosospira multiformis (strain ATCC 25196 / NCIMB 11849 / C 71).